A 234-amino-acid polypeptide reads, in one-letter code: Protein rgg8 (234 aa).

The protein localises to the cytoplasm. Its subcellular location is the nucleus. The polypeptide is Protein rgg8 (rgg8) (Schizosaccharomyces pombe (strain 972 / ATCC 24843) (Fission yeast)).